An 840-amino-acid polypeptide reads, in one-letter code: Phosphatidylglycerol lysyltransferase (840 aa).

The Cytoplasmic portion of the chain corresponds to 1 to 8 (MNQEVKNK). Residues 9 to 29 (IFSILKITFATALFIFVVITL) traverse the membrane as a helical segment. Topologically, residues 30-52 (YRELSGINFKDTLVEFSKINRMS) are extracellular. Residues 53-73 (LVLLFIGGGASLVILSMYDVI) traverse the membrane as a helical segment. Topologically, residues 74–89 (LSRALKMDISLGKVLR) are cytoplasmic. A helical transmembrane segment spans residues 90–110 (VSYIINALNAIVGFGGFIGAG). At 111–128 (VRAMVYKNYTHDKKKLVH) the chain is on the extracellular side. The chain crosses the membrane as a helical span at residues 129–149 (FISLILISMLTGLSLLSLLIV). Residues 150-161 (FHVFDASLILNK) are Cytoplasmic-facing. A helical transmembrane segment spans residues 162-182 (ITWVRWVLYAVSLFLPLFIIY). Residues 183–200 (SMVRPPDKNNRYVGLYCT) lie on the Extracellular side of the membrane. The helical transmembrane segment at 201–221 (LVSCVEWLAAAVVLYFCGVIV) threads the bilayer. Residues 222–229 (DVHVSFMS) are Cytoplasmic-facing. A helical transmembrane segment spans residues 230-250 (FIAIFIIAALSGLVSFIPGGF). Residues 251 to 271 (GAFDLVVLLGFKTLGVPEEKV) are Extracellular-facing. The chain crosses the membrane as a helical span at residues 272-292 (LLMLLLYRFAYYFVPVIIALI). Topologically, residues 293–337 (LSSFEFGTSAKKYIEGSKYFIPAKDVTSFLMSYQKDIIAKIPSLS) are cytoplasmic. Residues 338 to 358 (LAILVFFTSMIFFVNNLTIVY) form a helical membrane-spanning segment. At 359-369 (DALYDGNHLTY) the chain is on the extracellular side. A helical membrane pass occupies residues 370–390 (YLLLAIHTSACLLLLLNVVGI). Residues 391 to 394 (YKQS) are Cytoplasmic-facing. A run of 2 helical transmembrane segments spans residues 395-415 (RRAI…TLFT) and 416-436 (YASY…IVAF). The Cytoplasmic segment spans residues 437-450 (RRARRLKRPIRMRN). The chain crosses the membrane as a helical span at residues 451–471 (LVAMLLFSIFILYINHIFIAG). Residues 472–489 (TFYALDVYTIEMHTSVLK) lie on the Extracellular side of the membrane. Residues 490–510 (YYFWITILIIAIIVGAIAWLF) form a helical membrane-spanning segment. Residues 511-840 (DYQFSKVRIS…SKVMRVIRHK (330 aa)) are Cytoplasmic-facing.

Belongs to the LPG synthase family.

The protein localises to the cell membrane. It carries out the reaction L-lysyl-tRNA(Lys) + a 1,2-diacyl-sn-glycero-3-phospho-(1'-sn-glycerol) = a 1,2-diacyl-sn-glycero-3-phospho-1'-(3'-O-L-lysyl)-sn-glycerol + tRNA(Lys). Functionally, catalyzes the transfer of a lysyl group from L-lysyl-tRNA(Lys) to membrane-bound phosphatidylglycerol (PG), which produces lysylphosphatidylglycerol (LPG), a major component of the bacterial membrane with a positive net charge. LPG synthesis contributes to bacterial virulence as it is involved in the resistance mechanism against cationic antimicrobial peptides (CAMP) produces by the host's immune system (defensins, cathelicidins) and by the competing microorganisms (bacteriocins). In fact, the modification of anionic phosphatidylglycerol with positively charged L-lysine results in repulsion of the peptides. This chain is Phosphatidylglycerol lysyltransferase (mprF), found in Staphylococcus aureus (strain MRSA252).